We begin with the raw amino-acid sequence, 390 residues long: GTPase Obg (390 aa).

Residues 1–159 enclose the Obg domain; sequence MKFVDEATIL…RELMLELLLL (159 aa). One can recognise an OBG-type G domain in the interval 160-333; the sequence is ADVGMLGLPN…LCWDVMNFLN (174 aa). GTP-binding positions include 166-173, 191-195, 213-216, 283-286, and 314-316; these read GLPNAGKS, FTTLI, DIPG, NKID, and SAA. Ser173 and Thr193 together coordinate Mg(2+). Over residues 363–384 the composition is skewed to acidic residues; the sequence is EVEAEAESEDDDDWDEEDDDGV. A disordered region spans residues 363-390; it reads EVEAEAESEDDDDWDEEDDDGVEFIYER.

This sequence belongs to the TRAFAC class OBG-HflX-like GTPase superfamily. OBG GTPase family. In terms of assembly, monomer. It depends on Mg(2+) as a cofactor.

It is found in the cytoplasm. Functionally, an essential GTPase which binds GTP, GDP and possibly (p)ppGpp with moderate affinity, with high nucleotide exchange rates and a fairly low GTP hydrolysis rate. Plays a role in control of the cell cycle, stress response, ribosome biogenesis and in those bacteria that undergo differentiation, in morphogenesis control. The protein is GTPase Obg of Yersinia enterocolitica serotype O:8 / biotype 1B (strain NCTC 13174 / 8081).